The chain runs to 904 residues: Alpha-actinin-4 (904 aa).

The disordered stretch occupies residues Met-1 to Gln-27. The tract at residues Met-1 to His-259 is actin-binding. Calponin-homology (CH) domains lie at Lys-43–Ala-147 and Thr-156–Ser-262. Spectrin repeat units lie at residues His-286–Asn-396, His-406–Lys-511, Glu-521–Asp-632, and Arg-642–Asn-745. 2 EF-hand domains span residues Glu-758 to Asp-793 and Gln-799 to Asp-834. Ca(2+) is bound by residues Asp-771, Asp-773, Glu-782, Asp-812, Asn-814, Ser-816, and Ser-818.

It belongs to the alpha-actinin family. In terms of assembly, homodimer; antiparallel. Component of the CART complex. May interact with nuclear receptors.

It is found in the nucleus. The protein resides in the cytoplasm. It localises to the cell junction. The protein localises to the perinuclear region. In terms of biological role, F-actin cross-linking protein which is thought to anchor actin to a variety of intracellular structures. This is a bundling protein. Probably involved in vesicular trafficking via its association with the CART complex. Involved in tight junction assembly in epithelial cells. May also function as a transcriptional coactivator, stimulating transcription mediated by nuclear hormone receptors. This Gallus gallus (Chicken) protein is Alpha-actinin-4.